The following is a 1368-amino-acid chain: DNA-directed RNA polymerase subunit beta (1368 aa).

It belongs to the RNA polymerase beta chain family. As to quaternary structure, the RNAP catalytic core consists of 2 alpha, 1 beta, 1 beta' and 1 omega subunit. When a sigma factor is associated with the core the holoenzyme is formed, which can initiate transcription.

It carries out the reaction RNA(n) + a ribonucleoside 5'-triphosphate = RNA(n+1) + diphosphate. In terms of biological role, DNA-dependent RNA polymerase catalyzes the transcription of DNA into RNA using the four ribonucleoside triphosphates as substrates. The chain is DNA-directed RNA polymerase subunit beta from Syntrophotalea carbinolica (strain DSM 2380 / NBRC 103641 / GraBd1) (Pelobacter carbinolicus).